The sequence spans 788 residues: Ribonucleoside-diphosphate reductase subunit alpha (788 aa).

Positions 2 to 92 (ITVVKRNGRI…LYDLYHKVSG (91 aa)) constitute an ATP-cone domain. ATP contacts are provided by residues K6, 12 to 18 (EPLDITK), and T52. T200 lines the GDP pocket. Residues C216 and C497 are joined by a disulfide bond. Residues 223–225 (DNI) and R253 contribute to the dTTP site. GDP is bound at residue N424. N424 serves as the catalytic Proton acceptor. The active-site Cysteine radical intermediate is C426. Residues E428 and 661 to 663 (SSI) each bind GDP. The active-site Proton acceptor is the E428.

This sequence belongs to the ribonucleoside diphosphate reductase large chain family. In terms of assembly, tetramer of two alpha and two beta subunits.

It carries out the reaction a 2'-deoxyribonucleoside 5'-diphosphate + [thioredoxin]-disulfide + H2O = a ribonucleoside 5'-diphosphate + [thioredoxin]-dithiol. Under complex allosteric control mediated by deoxynucleoside triphosphates and ATP binding to separate specificity and activation sites on the alpha subunit. The type of nucleotide bound at the specificity site determines substrate preference. It seems probable that ATP makes the enzyme reduce CDP and UDP, dGTP favors ADP reduction and dTTP favors GDP reduction. Stimulated by ATP and inhibited by dATP binding to the activity site. Functionally, provides the precursors necessary for DNA synthesis. Catalyzes the biosynthesis of deoxyribonucleotides from the corresponding ribonucleotides. This is Ribonucleoside-diphosphate reductase subunit alpha (nrdA) from Helicobacter pylori (strain J99 / ATCC 700824) (Campylobacter pylori J99).